The following is a 172-amino-acid chain: Transmembrane protein 91 (172 aa).

The Extracellular segment spans residues 1–97 (MDNSSIQELQ…SPLLPHDHLG (97 aa)). The tract at residues 60–86 (GLGEPETPDFEDTLSSDSDSDDDGGDR) is disordered. A compositionally biased stretch (acidic residues) spans 65-83 (ETPDFEDTLSSDSDSDDDG). A helical membrane pass occupies residues 98 to 118 (LAVFSVLCCFWPVGIAAFCLA). The Cytoplasmic segment spans residues 119–139 (HKTNKAWAKGDVQGAGAASRR). A helical transmembrane segment spans residues 140–160 (AFLLGVLAVGLGLCTYAAALV). Over 161–172 (TLAAYLASRDPP) the chain is Extracellular.

The protein belongs to the CD225/Dispanin family.

It is found in the membrane. This is Transmembrane protein 91 (Tmem91) from Mus musculus (Mouse).